The primary structure comprises 194 residues: dITP/XTP pyrophosphatase (194 aa).

9–14 (THNPGK) contributes to the substrate binding site. Asp-40 and Asp-69 together coordinate Mg(2+). Asp-69 serves as the catalytic Proton acceptor. Residues Ser-70, 152–155 (FGYD), Lys-175, and 180–181 (HR) each bind substrate.

Belongs to the HAM1 NTPase family. Homodimer. It depends on Mg(2+) as a cofactor.

It carries out the reaction XTP + H2O = XMP + diphosphate + H(+). It catalyses the reaction dITP + H2O = dIMP + diphosphate + H(+). The enzyme catalyses ITP + H2O = IMP + diphosphate + H(+). In terms of biological role, pyrophosphatase that catalyzes the hydrolysis of nucleoside triphosphates to their monophosphate derivatives, with a high preference for the non-canonical purine nucleotides XTP (xanthosine triphosphate), dITP (deoxyinosine triphosphate) and ITP. Seems to function as a house-cleaning enzyme that removes non-canonical purine nucleotides from the nucleotide pool, thus preventing their incorporation into DNA/RNA and avoiding chromosomal lesions. This is dITP/XTP pyrophosphatase from Caulobacter vibrioides (strain ATCC 19089 / CIP 103742 / CB 15) (Caulobacter crescentus).